Consider the following 404-residue polypeptide: O-antigen ligase (404 aa).

11 helical membrane passes run 16–32, 39–55, 67–84, 96–115, 127–147, 168–183, 189–221, 228–246, 324–343, 363–379, and 385–401; these read IWNK…YFLD, HLII…QVSR, SVFY…YSIL, FENT…PVLL, VLFS…ILYI, SMVF…WLFR, LVFL…GVLW, WKLI…ALVI, ILYI…VYLY, YNAH…FYIV, and QVDI…LLAL.

This sequence belongs to the O-antigen ligase family.

It localises to the cell inner membrane. It catalyses the reaction a lipid-linked O antigen + a lipid A-core oligosaccharide = a lipopolysaccharide + a polyisoprenyl diphosphate.. It participates in bacterial outer membrane biogenesis; lipopolysaccharide biosynthesis. Its function is as follows. Transferase involved in the biosynthesis of the lipopolysaccharide (LPS). Catalyzes the transfer of a polymerized O-antigen molecule from its polyprenyl diphosphate membrane anchor to a terminal sugar of the lipid A-core oligosaccharide, finalizing the biosynthesis of the lipopolysaccharide. May also be involved in a feedback mechanism to regulate O-unit synthesis, based on the availability of O units on the periplasmic face of the membrane. The sequence is that of O-antigen ligase from Salmonella typhimurium (strain LT2 / SGSC1412 / ATCC 700720).